The following is a 209-amino-acid chain: Redox-sensing transcriptional repressor Rex (209 aa).

The H-T-H motif DNA-binding region spans 16–55 (LYYRFIQNLSLSGKQRVSSAELSEAVKVDSATIRRDFSYF). 90–95 (GVGNLG) contacts NAD(+).

Belongs to the transcriptional regulatory Rex family. In terms of assembly, homodimer.

It localises to the cytoplasm. Modulates transcription in response to changes in cellular NADH/NAD(+) redox state. The protein is Redox-sensing transcriptional repressor Rex of Bacillus cereus (strain ATCC 10987 / NRS 248).